The chain runs to 183 residues: Adenine phosphoribosyltransferase (183 aa).

This sequence belongs to the purine/pyrimidine phosphoribosyltransferase family. In terms of assembly, homodimer.

The protein localises to the cytoplasm. It catalyses the reaction AMP + diphosphate = 5-phospho-alpha-D-ribose 1-diphosphate + adenine. It participates in purine metabolism; AMP biosynthesis via salvage pathway; AMP from adenine: step 1/1. Functionally, catalyzes a salvage reaction resulting in the formation of AMP, that is energically less costly than de novo synthesis. This is Adenine phosphoribosyltransferase from Shigella flexneri serotype 5b (strain 8401).